Reading from the N-terminus, the 1052-residue chain is Fibroblast growth factor receptor homolog 2 (1052 aa).

The N-terminal stretch at 1-19 (MAKVPITLVMIIAIVSAAA) is a signal peptide. Residues 20–600 (DLGCDYGHHR…EIYALLHAHP (581 aa)) are Extracellular-facing. 3 consecutive Ig-like C2-type domains span residues 23-117 (CDYG…IASF), 124-230 (PALP…PTQL), and 240-340 (PMLK…RTVA). Cysteines 30 and 90 form a disulfide. Asn99, Asn137, Asn175, Asn181, Asn249, and Asn257 each carry an N-linked (GlcNAc...) asparagine glycan. Residues Cys164 and Cys217 are joined by a disulfide bond. A disulfide bridge connects residues Cys262 and Cys329. Residues 358 to 372 (TTTTTVASPIPTAST) show a composition bias toward low complexity. A disordered region spans residues 358–393 (TTTTTVASPIPTASTGEDNDDDVENPAAEASGGVGP). 2 consecutive Ig-like C2-type domains span residues 393 to 478 (PPVF…FSVQ) and 487 to 585 (PIIV…RVVS). The cysteines at positions 416 and 462 are disulfide-linked. 9 N-linked (GlcNAc...) asparagine glycosylation sites follow: Asn423, Asn444, Asn494, Asn500, Asn526, Asn541, Asn546, Asn555, and Asn576. An intrachain disulfide couples Cys507 to Cys566. A helical membrane pass occupies residues 601 to 626 (LGFTLAAITIVALFLLGSAFITFMLR). Residues 627 to 1052 (RLRREKLLKL…LRYQYTYKFN (426 aa)) lie on the Cytoplasmic side of the membrane. Residues 712 to 1000 (LSLGSILGEG…ELVESFDGIL (289 aa)) enclose the Protein kinase domain. ATP is bound by residues 718–726 (LGEGAFGRV) and Lys748. Asp864 (proton acceptor) is an active-site residue. Phosphotyrosine; by autocatalysis is present on Tyr895. Residues 1017–1038 (PMLETPPSSGDEDDGSDTETFR) form a disordered region.

The protein belongs to the protein kinase superfamily. Tyr protein kinase family. Fibroblast growth factor receptor subfamily. During embryogenesis, expression is seen in mesoderm, endodermal precursor cells, CNS midline cells and trachea and salivary duct ectodermal cells.

The protein resides in the membrane. It carries out the reaction L-tyrosyl-[protein] + ATP = O-phospho-L-tyrosyl-[protein] + ADP + H(+). May be required for patterning of muscle precursor cells: generation of mesodermal and endodermal layers, invaginations of various types of cells, and CNS formation. Essential for the ability of the migrating tracheal and midline cells to recognize external guiding cues. This Drosophila melanogaster (Fruit fly) protein is Fibroblast growth factor receptor homolog 2 (btl).